Consider the following 309-residue polypeptide: MPIRVLDELPAVNFLREENVFVMTTSRATGQEIRPLKVIILNLMPKKIETENQFLRLLSNSPLQVDIQLLRIDARESRNTPAEHLNNFYCNFEDICDQNFDGLIVTGAPLGLVEFNDVAYWPQIRQVLEWAKDHVTSTLFVCWAVQAALNILYGIPKQTRTDKLSGVYEHHILHPYALLTRGFDDTFLAPHSRYADFPAALIRDYTDLEILAETEGGDAYLFASKDKRIAFVTGHPEYDAHTLAGEYFRDVEAGLNPDIPYNYFPKNDPQNKPRATWRSHGNLLFTNWLNYYVYQITPYDLRHMNPTLD.

Residue cysteine 142 is the Acyl-thioester intermediate of the active site. Residues lysine 163 and serine 192 each contribute to the substrate site. Histidine 235 functions as the Proton acceptor in the catalytic mechanism. Glutamate 237 is an active-site residue. Arginine 249 contributes to the substrate binding site.

The protein belongs to the MetA family. Homodimer.

The protein localises to the cytoplasm. The catalysed reaction is L-homoserine + succinyl-CoA = O-succinyl-L-homoserine + CoA. Its pathway is amino-acid biosynthesis; L-methionine biosynthesis via de novo pathway; O-succinyl-L-homoserine from L-homoserine: step 1/1. Its function is as follows. Transfers a succinyl group from succinyl-CoA to L-homoserine, forming succinyl-L-homoserine. In Salmonella arizonae (strain ATCC BAA-731 / CDC346-86 / RSK2980), this protein is Homoserine O-succinyltransferase.